The primary structure comprises 903 residues: Protein translocase subunit SecA (903 aa).

Residues Gln89, 107 to 111 (GEGKT), and Asp502 contribute to the ATP site. Zn(2+)-binding residues include Cys886, Cys888, Cys897, and His898.

The protein belongs to the SecA family. Monomer and homodimer. Part of the essential Sec protein translocation apparatus which comprises SecA, SecYEG and auxiliary proteins SecDF-YajC and YidC. Requires Zn(2+) as cofactor.

The protein resides in the cell inner membrane. It is found in the cytoplasm. It carries out the reaction ATP + H2O + cellular proteinSide 1 = ADP + phosphate + cellular proteinSide 2.. Functionally, part of the Sec protein translocase complex. Interacts with the SecYEG preprotein conducting channel. Has a central role in coupling the hydrolysis of ATP to the transfer of proteins into and across the cell membrane, serving both as a receptor for the preprotein-SecB complex and as an ATP-driven molecular motor driving the stepwise translocation of polypeptide chains across the membrane. The sequence is that of Protein translocase subunit SecA from Sinorhizobium medicae (strain WSM419) (Ensifer medicae).